Consider the following 78-residue polypeptide: Large ribosomal subunit protein bL28 (78 aa).

Residues 1–20 form a disordered region; that stretch reads MSRVCQVTGKGPVTGNNISH.

The protein belongs to the bacterial ribosomal protein bL28 family.

This is Large ribosomal subunit protein bL28 from Stutzerimonas stutzeri (strain A1501) (Pseudomonas stutzeri).